A 188-amino-acid chain; its full sequence is MSLYALLLIALGMSMDAFAVALAKGAAVRMPPRKIAATALVFGTVEALTPLAGWVGGFYAKPFISEWDHWAAFVLLGGLGLKMMHEGLSGEAEDARENKRESWWLTVLTAFGTSIDSMIVGVGLAFMEVNIAFAAAIIGMATTVLVAVGLTVGRALGVLFGRRAEFAGGLVLIAIGTWTLLSHLGLIG.

6 helical membrane passes run Leu-3 to Ala-23, Ile-35 to Val-55, Trp-70 to Gly-90, Trp-104 to Phe-126, Met-140 to Phe-160, and Ala-167 to Ile-187.

The protein belongs to the MntP (TC 9.B.29) family.

The protein localises to the cell inner membrane. In terms of biological role, probably functions as a manganese efflux pump. This chain is Putative manganese efflux pump MntP, found in Neisseria meningitidis serogroup C / serotype 2a (strain ATCC 700532 / DSM 15464 / FAM18).